The sequence spans 462 residues: Cysteine--tRNA ligase (462 aa).

Position 24 (C24) interacts with Zn(2+). The 'HIGH' region motif lies at 26–36; it reads PTVYDDAHLGH. Zn(2+) is bound by residues C199, H224, and E228. Residues 256 to 260 carry the 'KMSKS' region motif; the sequence is KMSKS. K259 contributes to the ATP binding site.

The protein belongs to the class-I aminoacyl-tRNA synthetase family. In terms of assembly, monomer. Zn(2+) is required as a cofactor.

It is found in the cytoplasm. The enzyme catalyses tRNA(Cys) + L-cysteine + ATP = L-cysteinyl-tRNA(Cys) + AMP + diphosphate. The chain is Cysteine--tRNA ligase from Campylobacter jejuni subsp. jejuni serotype O:23/36 (strain 81-176).